The following is a 971-amino-acid chain: UPF0182 protein CMS1887 (971 aa).

The next 7 helical transmembrane spans lie at 16–36 (LAITAAIIAALVIAFFIFAGF), 56–76 (WGAGIALFFIGFLAMAIPVFV), 108–128 (LAMFAIPAVFGLFAGVSASSG), 161–181 (FYHAVVGFASAVVIISMLGVL), 205–225 (IQIAITAGVYFLLQGVSIWLD), 255–275 (TILAGIAVVVAVMFIITAAIG), and 281–301 (IIGTAGLIVASILIGTAYPAI). The segment covering 687–702 (QDLWTTPNDPTATTEA) has biased composition (polar residues). Disordered stretches follow at residues 687–706 (QDLWTTPNDPTATTEAGTPA) and 874–924 (GATA…AQDV). Composition is skewed to low complexity over residues 884–900 (PTTPADGAAGDGSTDGA) and 907–921 (STPTPAPTASPAAPA).

Belongs to the UPF0182 family.

The protein localises to the cell membrane. The chain is UPF0182 protein CMS1887 from Clavibacter sepedonicus (Clavibacter michiganensis subsp. sepedonicus).